We begin with the raw amino-acid sequence, 182 residues long: Orotate phosphoribosyltransferase (182 aa).

Residues arginine 96, lysine 97, lysine 100, histidine 102, and 122–130 each bind 5-phospho-alpha-D-ribose 1-diphosphate; that span reads EDTSTTGGS. The orotate site is built by threonine 126 and arginine 154.

Belongs to the purine/pyrimidine phosphoribosyltransferase family. PyrE subfamily. As to quaternary structure, homodimer. Requires Mg(2+) as cofactor.

The enzyme catalyses orotidine 5'-phosphate + diphosphate = orotate + 5-phospho-alpha-D-ribose 1-diphosphate. It functions in the pathway pyrimidine metabolism; UMP biosynthesis via de novo pathway; UMP from orotate: step 1/2. Its function is as follows. Catalyzes the transfer of a ribosyl phosphate group from 5-phosphoribose 1-diphosphate to orotate, leading to the formation of orotidine monophosphate (OMP). In Streptomyces coelicolor (strain ATCC BAA-471 / A3(2) / M145), this protein is Orotate phosphoribosyltransferase.